Consider the following 89-residue polypeptide: HssA/B-like protein 16 (89 aa).

It belongs to the hssA/B family.

In Dictyostelium discoideum (Social amoeba), this protein is HssA/B-like protein 16 (hssl16).